The chain runs to 39 residues: Putative beta-neurotoxin (39 aa).

Residues 1-39 (GGKEGYPLNSSNGCKSGRFAGTNSNENTECKGXDAENGY) are disordered. Residues 3–39 (KEGYPLNSSNGCKSGRFAGTNSNENTECKGXDAENGY) form the LCN-type CS-alpha/beta domain. A compositionally biased stretch (basic and acidic residues) spans 28–39 (TECKGXDAENGY).

The protein belongs to the long (4 C-C) scorpion toxin superfamily. Sodium channel inhibitor family. Beta subfamily. As to expression, expressed by the venom gland.

Its subcellular location is the secreted. Its function is as follows. Beta toxins bind voltage-independently at site-4 of sodium channels (Nav) and shift the voltage of activation toward more negative potentials thereby affecting sodium channel activation and promoting spontaneous and repetitive firing. This chain is Putative beta-neurotoxin, found in Tityus pachyurus (Colombian scorpion).